The primary structure comprises 331 residues: Nucleotide sugar transporter SLC35B4 (331 aa).

The next 11 membrane-spanning stretches (helical) occupy residues 4 to 24 (AFAVGLVFAGCCSNVIFLELL), 30 to 50 (GCGNIVTFAQFLFIAVEGFLF), 59 to 79 (PAIPIRYYAIMVTMFFTVSVV), 92 to 112 (LHMIFRSGSLIANMILGIIIL), 124 to 144 (IALVSAGIFICTFMSAKQVTV), 153 to 173 (GFQAFAWWLLGIAALTFALLM), 201 to 221 (ALPLPGFIFLASDIYDHVVLF), 229 to 249 (VPVIGVTMPVMWFYLLMNVVT), 251 to 267 (YVCIRGVFILTTECTSL), 268 to 288 (TVTLVVTLRKFVSLIFSILYF), and 294 to 314 (MWHWLGTSFVFIGTLMYTEVW). The Mediates endoplasmic reticulum retention signature appears at 326-331 (KDDKKD).

It belongs to the nucleotide-sugar transporter family. SLC35B subfamily.

Its subcellular location is the endoplasmic reticulum membrane. It catalyses the reaction UDP-N-acetyl-alpha-D-glucosamine(in) + UDP-alpha-D-glucuronate(out) = UDP-N-acetyl-alpha-D-glucosamine(out) + UDP-alpha-D-glucuronate(in). The catalysed reaction is UDP-alpha-D-xylose(in) + UDP-alpha-D-glucuronate(out) = UDP-alpha-D-xylose(out) + UDP-alpha-D-glucuronate(in). In terms of biological role, antiporter that transports nucleotide sugars across the endoplasmic reticulum (ER) membrane in exchange for another nucleotide sugar. May couple UDP-alpha-D-glucuronate (UDP-GlcA) or UDP-alpha-D-xylose (UDP-Xyl) efflux to UDP-alpha-D-glucuronate (UDP-GlcA) influx into the ER lumen, which in turn stimulates glucuronidation and excretion of endobiotics and xenobiotics. The protein is Nucleotide sugar transporter SLC35B4 (Slc35b4) of Mus musculus (Mouse).